A 391-amino-acid polypeptide reads, in one-letter code: MGEENQPNYTISQENWSLHRKGYDDQQRHQEKVQEAIKNNLPDLVTEESIVMSNGKDVVKIPIRSLDEYKIRYNYDKNKHVGQGNGDSKVGDVVARDGSGGQKQKGPGKGQGAGDAAGEDYYEAEVSILELEQAFFKELELPNLKRKEMDENRIEHVEFNDIRKTGLWGNIDKKRTMISAYKRNAMRGKASFHPIHQEDLKFRTWNEVLKPDSKAVVLAMMDTSGSMGIWEKYMARSFFFWMTRFLRTKYETVDIEFIAHHTEAKVVPEEEFFSKGESGGTICSSVYKKALELIDNKYSPDRYNIYPFHFSDGDNLTSDNARCVKLVEELMKKCNMFGYGEVNQYNRHSTLMSAYKNIKDENFRYYILKQKADVFHAMKSFFREEAGEKMA.

Over residues 1–16 (MGEENQPNYTISQENW) the composition is skewed to polar residues. 2 disordered regions span residues 1-31 (MGEENQPNYTISQENWSLHRKGYDDQQRHQE) and 80-117 (HVGQGNGDSKVGDVVARDGSGGQKQKGPGKGQGAGDAA). Basic and acidic residues predominate over residues 21–31 (KGYDDQQRHQE). Gly residues predominate over residues 98 to 115 (GSGGQKQKGPGKGQGAGD).

The protein belongs to the UPF0229 family.

In Bacillus cereus (strain 03BB102), this protein is UPF0229 protein BCA_0588.